A 995-amino-acid chain; its full sequence is DExH-box ATP-dependent RNA helicase DExH1 (995 aa).

Disordered regions lie at residues 1-42 and 156-192; these read MPPH…EQRW and KTTQESGSSGASASAFNDQQDRTSTLGLKRPDSASKL. The segment covering 25 to 37 has biased composition (gly residues); that stretch reads RGGGGRGGGGGGR. The segment covering 161–170 has biased composition (low complexity); the sequence is SGSSGASASA. A compositionally biased stretch (polar residues) spans 171–181; sequence FNDQQDRTSTL. The 168-residue stretch at 238 to 405 folds into the Helicase ATP-binding domain; that stretch reads LNSVSQNQVL…FGNSPTMHIP (168 aa). 251–258 is a binding site for ATP; the sequence is GETGCGKT. Residues 352 to 355 carry the DEIH box motif; it reads DEIH. The tract at residues 429–450 is disordered; it reads SSDSGNYQGSSRGRRRESESKK. One can recognise a Helicase C-terminal domain in the interval 484 to 663; sequence QIDVDLVEAT…ELCLHIKSLQ (180 aa).

This sequence belongs to the DExH box helicase family.

The enzyme catalyses ATP + H2O = ADP + phosphate + H(+). In Arabidopsis thaliana (Mouse-ear cress), this protein is DExH-box ATP-dependent RNA helicase DExH1.